A 213-amino-acid polypeptide reads, in one-letter code: Eukaryotic translation initiation factor isoform 4E (213 aa).

A disordered region spans residues 1 to 37 (MATEVAAAVPPPQLDAEENSGLEAAAAEAKIQPSSGP). MRNA is bound by residues 56 to 61 (QGAAWG), Lys-88, and 106 to 107 (WE). Cysteines 111 and 150 form a disulfide. MRNA contacts are provided by residues 157 to 162 (RQRQDK) and 202 to 205 (KRER).

Belongs to the eukaryotic initiation factor 4E family. EIF4F is a multi-subunit complex, the composition of which varies with external and internal environmental conditions. It is composed of at least EIF4A, EIF4E and EIF4G. EIF4E is also known to interact with other partners. In higher plants two isoforms of EIF4F have been identified, named isoform EIF4F and isoform EIF(iso)4F. Isoform EIF4F has subunits p220 and p26, whereas isoform EIF(iso)4F has subunits p82 and p28. As to quaternary structure, (Microbial infection) Interacts with potyvirus viral genome-linked protein (VPg) of plum pox virus (PPV) strain D both in nucleus and cytoplasm; this interaction is possible in susceptible hosts but is impaired in resistant plants. In terms of processing, according to the redox status, the Cys-111-Cys-150 disulfide bridge may have a role in regulating protein function by affecting its ability to bind capped mRNA. Mostly expressed in leaves, flower buds, leaf buds and anthers, to a lower extent in roots, stems and green immature fruit, and, at low levels, in petals.

Its subcellular location is the cytoplasm. It localises to the nucleus. Component of the protein complex eIF4F, which is involved in the recognition of the mRNA cap, ATP-dependent unwinding of 5'-terminal secondary structure and recruitment of mRNA to the ribosome. Recognizes and binds the 7-methylguanosine-containing mRNA cap during an early step in the initiation of protein synthesis and facilitates ribosome binding by inducing the unwinding of the mRNAs secondary structures. Key component of recessive resistance to potyviruses such as the plum pox virus (PPV) strain D. Its function is as follows. (Microbial infection) Susceptibility host factor required for viral infection by recruiting viral RNAs to the host ribosomal complex via an interaction with viral genome-linked protein (VPg). The chain is Eukaryotic translation initiation factor isoform 4E from Prunus domestica (Garden plum).